The primary structure comprises 234 residues: Probable transcriptional regulatory protein PSPTO_3162 (234 aa).

This sequence belongs to the TACO1 family.

It localises to the cytoplasm. The sequence is that of Probable transcriptional regulatory protein PSPTO_3162 from Pseudomonas syringae pv. tomato (strain ATCC BAA-871 / DC3000).